Consider the following 327-residue polypeptide: DNA-directed RNA polymerase subunit alpha (327 aa).

Residues 1–233 are alpha N-terminal domain (alpha-NTD); it reads MQNSASEFLK…DQLSIFADLQ (233 aa). The segment at 247-327 is alpha C-terminal domain (alpha-CTD); the sequence is VDPILLRPVD…NWPPAGLEKP (81 aa).

It belongs to the RNA polymerase alpha chain family. In terms of assembly, homodimer. The RNAP catalytic core consists of 2 alpha, 1 beta, 1 beta' and 1 omega subunit. When a sigma factor is associated with the core the holoenzyme is formed, which can initiate transcription.

It catalyses the reaction RNA(n) + a ribonucleoside 5'-triphosphate = RNA(n+1) + diphosphate. DNA-dependent RNA polymerase catalyzes the transcription of DNA into RNA using the four ribonucleoside triphosphates as substrates. This chain is DNA-directed RNA polymerase subunit alpha, found in Laribacter hongkongensis (strain HLHK9).